The sequence spans 433 residues: Trigger factor (433 aa).

The PPIase FKBP-type domain maps to Gly-163 to Pro-248.

The protein belongs to the FKBP-type PPIase family. Tig subfamily.

Its subcellular location is the cytoplasm. The catalysed reaction is [protein]-peptidylproline (omega=180) = [protein]-peptidylproline (omega=0). In terms of biological role, involved in protein export. Acts as a chaperone by maintaining the newly synthesized protein in an open conformation. Functions as a peptidyl-prolyl cis-trans isomerase. The sequence is that of Trigger factor from Staphylococcus epidermidis (strain ATCC 35984 / DSM 28319 / BCRC 17069 / CCUG 31568 / BM 3577 / RP62A).